Here is a 447-residue protein sequence, read N- to C-terminus: Multicopper oxidase mco (447 aa).

The segment covering 1–25 has biased composition (basic and acidic residues); sequence MMNMKEDKKNTMDMKNMKHHDERKK. Positions 1–28 are disordered; it reads MMNMKEDKKNTMDMKNMKHHDERKKLNS. Cu cation contacts are provided by His-107, His-109, His-147, His-149, His-375, His-378, His-380, His-428, Cys-429, His-430, His-434, and Met-439.

It belongs to the multicopper oxidase family. Cu cation is required as a cofactor.

Its subcellular location is the cytoplasm. May be involved in copper homeostasis and oxidative stress response. This Staphylococcus epidermidis (strain ATCC 12228 / FDA PCI 1200) protein is Multicopper oxidase mco (mco).